The primary structure comprises 217 residues: Ribosomal RNA small subunit methyltransferase G (217 aa).

Residues glycine 79, leucine 84, 130 to 131, and arginine 145 each bind S-adenosyl-L-methionine; that span reads IE.

Belongs to the methyltransferase superfamily. RNA methyltransferase RsmG family.

The protein resides in the cytoplasm. It carries out the reaction guanosine(527) in 16S rRNA + S-adenosyl-L-methionine = N(7)-methylguanosine(527) in 16S rRNA + S-adenosyl-L-homocysteine. Functionally, specifically methylates the N7 position of guanine in position 527 of 16S rRNA. The polypeptide is Ribosomal RNA small subunit methyltransferase G (Hahella chejuensis (strain KCTC 2396)).